The chain runs to 242 residues: Type III pantothenate kinase (242 aa).

An ATP-binding site is contributed by aspartate 7–lysine 14. Residues tyrosine 91 and glycine 98–arginine 101 each bind substrate. Residue aspartate 100 is the Proton acceptor of the active site. Threonine 121 is an ATP binding site. Position 171 (threonine 171) interacts with substrate.

It belongs to the type III pantothenate kinase family. In terms of assembly, homodimer. Requires NH4(+) as cofactor. K(+) serves as cofactor.

Its subcellular location is the cytoplasm. It carries out the reaction (R)-pantothenate + ATP = (R)-4'-phosphopantothenate + ADP + H(+). Its pathway is cofactor biosynthesis; coenzyme A biosynthesis; CoA from (R)-pantothenate: step 1/5. Catalyzes the phosphorylation of pantothenate (Pan), the first step in CoA biosynthesis. In Xanthomonas campestris pv. campestris (strain B100), this protein is Type III pantothenate kinase.